A 65-amino-acid polypeptide reads, in one-letter code: Large ribosomal subunit protein bL35 (65 aa).

Composition is skewed to basic residues over residues 1 to 18, 31 to 44, and 55 to 65; these read MPKM…KRTA, HRFH…RRQL, and VKRYKKMIPAK. The interval 1-65 is disordered; the sequence is MPKMKTKSAA…KRYKKMIPAK (65 aa).

Belongs to the bacterial ribosomal protein bL35 family.

The sequence is that of Large ribosomal subunit protein bL35 from Limosilactobacillus fermentum (strain NBRC 3956 / LMG 18251) (Lactobacillus fermentum).